Consider the following 472-residue polypeptide: Pentatricopeptide repeat-containing protein At3g18970 (472 aa).

PPR repeat units follow at residues 107 to 139, 146 to 180, 181 to 216, 219 to 253, 256 to 286, 287 to 321, 322 to 352, and 358 to 388; these read NERTFVFVLGACARSASSSALRVGRIVHGMVKK, SELIGTTLLHFYAKNGDLRYARKVFDEMPERTSVT, WNAMIGGYCSHKDKGNHNARKAMVLFRRFSCCGSGV, TDTTMVCVLSAISQTGLLEIGSLVHGYIEKLGFTP, DVFIGTALVDMYSKCGCLNNAFSVFELMKVK, NVFTWTSMATGLALNGRGNETPNLLNRMAESGIKP, NEITFTSLLSAYRHIGLVEEGIELFKSMKTR, and VIEHYGCIVDLLGKAGRIQEAYQFILAMPIK. Residues 393–472 form a type E motif; degenerate region; sequence LLRSLCNACS…IKTRPGYSFV (80 aa).

The protein belongs to the PPR family. PCMP-E subfamily.

The polypeptide is Pentatricopeptide repeat-containing protein At3g18970 (PCMP-E93) (Arabidopsis thaliana (Mouse-ear cress)).